Here is a 222-residue protein sequence, read N- to C-terminus: MNKLSNAFSVLAFADEDAPMASSSSTGKQEESVNGSLEDGDYKQPLVWIDLEMTGLNVEVDRILEIACIITNGDLTQSVEGPDLVVRQTKDCLDKMDDWCQTHHGASGLTKKVLLSAITEREAEQKVIEFVKKHVGSGNPLLAGNSVYVDFLFLKKYMPELAALFPHILVDVSSVKALCARWFPIERRKAPAKKNNHRAMDDIRESIKELKYYKKTIFKARR.

Residues 19–38 are disordered; that stretch reads PMASSSSTGKQEESVNGSLE. Residues 21-35 are compositionally biased toward polar residues; sequence ASSSSTGKQEESVNG. Positions 46-210 constitute an Exonuclease domain; sequence LVWIDLEMTG…DDIRESIKEL (165 aa). His-167 is an active-site residue.

This sequence belongs to the oligoribonuclease family.

3'-to-5' exoribonuclease specific for small oligoribonucleotides. In Arabidopsis thaliana (Mouse-ear cress), this protein is Oligoribonuclease.